A 280-amino-acid polypeptide reads, in one-letter code: UPF0276 protein CC_2906 (280 aa).

The protein belongs to the UPF0276 family.

The polypeptide is UPF0276 protein CC_2906 (Caulobacter vibrioides (strain ATCC 19089 / CIP 103742 / CB 15) (Caulobacter crescentus)).